The chain runs to 211 residues: Large ribosomal subunit protein eL13 (211 aa).

This sequence belongs to the eukaryotic ribosomal protein eL13 family. In terms of assembly, component of the 60S large ribosomal subunit (LSU).

Its subcellular location is the cytoplasm. Its function is as follows. Component of the ribosome, a large ribonucleoprotein complex responsible for the synthesis of proteins in the cell. The small ribosomal subunit (SSU) binds messenger RNAs (mRNAs) and translates the encoded message by selecting cognate aminoacyl-transfer RNA (tRNA) molecules. The large subunit (LSU) contains the ribosomal catalytic site termed the peptidyl transferase center (PTC), which catalyzes the formation of peptide bonds, thereby polymerizing the amino acids delivered by tRNAs into a polypeptide chain. The nascent polypeptides leave the ribosome through a tunnel in the LSU and interact with protein factors that function in enzymatic processing, targeting, and the membrane insertion of nascent chains at the exit of the ribosomal tunnel. As part of the LSU, it is probably required for its formation and the maturation of rRNAs. The sequence is that of Large ribosomal subunit protein eL13 (RPL13) from Gallus gallus (Chicken).